Reading from the N-terminus, the 1267-residue chain is DNA-directed RNA polymerase subunit beta (1267 aa).

This sequence belongs to the RNA polymerase beta chain family. The RNAP catalytic core consists of 2 alpha, 1 beta, 1 beta' and 1 omega subunit. When a sigma factor is associated with the core the holoenzyme is formed, which can initiate transcription.

The catalysed reaction is RNA(n) + a ribonucleoside 5'-triphosphate = RNA(n+1) + diphosphate. Functionally, DNA-dependent RNA polymerase catalyzes the transcription of DNA into RNA using the four ribonucleoside triphosphates as substrates. The polypeptide is DNA-directed RNA polymerase subunit beta (rpoB) (Carsonella ruddii (strain PV)).